We begin with the raw amino-acid sequence, 73 residues long: Metallothionein-like protein type 2 (73 aa).

This sequence belongs to the metallothionein superfamily. Type 15 family.

Functionally, metallothioneins have a high content of cysteine residues that bind various heavy metals. The chain is Metallothionein-like protein type 2 from Solanum lycopersicum (Tomato).